The chain runs to 462 residues: Chitinase-like mite allergen Der f 18.0101 (462 aa).

The N-terminal stretch at 1–25 is a signal peptide; that stretch reads MTRFSLTVLAVLAACFGSNIRPNVA. In terms of domain architecture, GH18 spans 29–378; the sequence is PKTVCYYESW…HAIQSNYYHG (350 aa). The cysteines at positions 33 and 58 are disulfide-linked. Asn-338 is a glycosylation site (N-linked (GlcNAc...) asparagine). Residues 404–462 form the Chitin-binding type-2 domain; it reads VFHCHEEGFFRDKTYCATYYECKKGDFGLEKTVHHCANHLQAFDEVSRTCIDHTKIPGC. A disulfide bridge links Cys-439 with Cys-453.

Belongs to the glycosyl hydrolase 18 family. Chitinase class II subfamily. Expressed in the upper digestive tract. Staining is observed in the ventriculus, and in very rare individuals, also in the intestine or esophagus. No expression in fecal pellets neither inside the rectum nor defecated outside of the body.

It localises to the secreted. In terms of biological role, probably a non-catalytic chitinase-like protein, which binds to insoluble chitin and enhances the activity of the catalytic chitinases. Has weak chitin-binding activity. This is Chitinase-like mite allergen Der f 18.0101 from Dermatophagoides farinae (American house dust mite).